Consider the following 277-residue polypeptide: Uridine-cytidine kinase 1 (277 aa).

Gly residues predominate over residues 1–10 (MASAGGGDCE). The tract at residues 1 to 29 (MASAGGGDCEGAGPEADRPHQRPFLIGVS) is disordered. Residue 30-38 (GGTASGKST) coordinates ATP. Residues D87, Y115, H120, R169, R178, and Q186 each coordinate substrate. ATP is bound at residue D215. A disordered region spans residues 246–277 (RSHKRTFPEPGEHPAVLASGKRSHLESSSRPH). T251 is subject to Phosphothreonine. The span at 268–277 (SHLESSSRPH) shows a compositional bias: basic and acidic residues.

It belongs to the uridine kinase family.

It carries out the reaction uridine + ATP = UMP + ADP + H(+). The catalysed reaction is cytidine + ATP = CMP + ADP + H(+). Its pathway is pyrimidine metabolism; CTP biosynthesis via salvage pathway; CTP from cytidine: step 1/3. The protein operates within pyrimidine metabolism; UMP biosynthesis via salvage pathway; UMP from uridine: step 1/1. Its function is as follows. Phosphorylates uridine and cytidine to uridine monophosphate and cytidine monophosphate. Does not phosphorylate deoxyribonucleosides or purine ribonucleosides. Can use ATP or GTP as a phosphate donor. This chain is Uridine-cytidine kinase 1 (UCK1), found in Bos taurus (Bovine).